An 86-amino-acid polypeptide reads, in one-letter code: uncharacterized protein (86 aa).

2 4Fe-4S ferredoxin-type domains span residues 1 to 29 (MALL…IGDE) and 31 to 65 (YVID…PDPE). C9, C12, C15, C19, C38, C41, C50, and C54 together coordinate [4Fe-4S] cluster.

[4Fe-4S] cluster is required as a cofactor.

This is an uncharacterized protein from Haemophilus influenzae (strain ATCC 51907 / DSM 11121 / KW20 / Rd).